The chain runs to 128 residues: Conopressin-conophysin (128 aa).

Positions 1-27 (MTRSAMQMGRLTLVLCLLLLLLLTTQA) are cleaved as a signal peptide. A disulfide bridge connects residues Cys-28 and Cys-33. The residue at position 36 (Gly-36) is a Glycine amide. The propeptide occupies 37–44 (GKRDVDER). 7 disulfide bridges follow: Cys-50–Cys-90, Cys-53–Cys-64, Cys-58–Cys-80, Cys-65–Cys-70, Cys-97–Cys-115, Cys-109–Cys-127, and Cys-116–Cys-121.

It belongs to the vasopressin/oxytocin family. As to expression, expressed by the venom gland.

The protein localises to the secreted. Targets vasopressin-oxytocin related receptors. Is more active on fish receptors than on their human counterparts, supporting an evolved role of this conopressin in the envenomation process. Acts as an agonist on zebrafish vasopressin receptors V1a1R (EC(50)=10.6 nM), V1a2R (EC(50)=44.06 nM, partial agonist), V2R (EC(50)=299.2 nM) and oxytocin receptor (EC(50)=353.73 nM, partial agonist). Shows a weaker activity on human receptors AVPR1B (EC(50)=51.92 nM), AVPR1A (EC(50)=123.78 nM), AVPR2 (EC(50)=299.2 nM) and oxytocin (OXTR) receptor (EC(50)=455.66 nM, partial agonist). In vivo, exhibits grooming and scratching behavior in mice, following intracerebral injection. The chain is Conopressin-conophysin from Conus geographus (Geography cone).